The chain runs to 297 residues: Protease HtpX homolog (297 aa).

A helical transmembrane segment spans residues 16-36; the sequence is IFMAIGFLVGGMAGMILAFVV. A Zn(2+)-binding site is contributed by His-134. Glu-135 is an active-site residue. Residue His-138 participates in Zn(2+) binding. Helical transmembrane passes span 147 to 167 and 175 to 195; these read MTVT…ALFF and IGSI…QMAI. Glu-200 serves as a coordination point for Zn(2+).

This sequence belongs to the peptidase M48B family. Zn(2+) serves as cofactor.

The protein resides in the cell inner membrane. This chain is Protease HtpX homolog, found in Hyphomonas neptunium (strain ATCC 15444).